The chain runs to 942 residues: Protein FAM184B (942 aa).

Disordered regions lie at residues 1–26 and 73–97; these read MASA…RGGS and QEDL…TSED. 3 coiled-coil regions span residues 89-150, 196-337, and 387-495; these read QEQS…RVLI, EMHQ…DRLM, and SETQ…SLLE. The segment at 486-542 is disordered; it reads STKLQNSLLEDPCSRPKKPARDEGLEKLTDEEESSSDEEERTGESVKGKSDLQPPFE. Basic and acidic residues predominate over residues 504–513; sequence PARDEGLEKL. Over residues 514–526 the composition is skewed to acidic residues; sequence TDEEESSSDEEER. Coiled-coil stretches lie at residues 575 to 619 and 686 to 815; these read NKDS…ESLR and EKGL…ERRF. A disordered region spans residues 880–934; it reads APPITKSPSLDPSPSCSQPYKPTQLLDGKTASRTQDGEPAQPKEAPQKQGSPHQE. The segment covering 885–900 has biased composition (polar residues); that stretch reads KSPSLDPSPSCSQPYK.

It belongs to the FAM184 family.

This chain is Protein FAM184B (Fam184b), found in Mus musculus (Mouse).